Reading from the N-terminus, the 346-residue chain is Insertion element IS476 uncharacterized 39.2 kDa protein (346 aa).

The segment at 1–50 is disordered; it reads MVSARPAFISGGPSTGGWRPTRQAAERTGGPEHSIEEVAGRGAPGHRSAE. A compositionally biased stretch (basic and acidic residues) spans 29-39; the sequence is GGPEHSIEEVA. The Integrase catalytic domain occupies 169 to 329; the sequence is ASSMPNDTWS…IPPAQFAANY (161 aa).

The polypeptide is Insertion element IS476 uncharacterized 39.2 kDa protein (Xanthomonas euvesicatoria).